Consider the following 89-residue polypeptide: Large ribosomal subunit protein bL27 (89 aa).

Residues 1–21 (MAHKKAGGSSRNGRDSKGKRL) are disordered.

This sequence belongs to the bacterial ribosomal protein bL27 family.

The polypeptide is Large ribosomal subunit protein bL27 (Bradyrhizobium sp. (strain BTAi1 / ATCC BAA-1182)).